The following is a 1726-amino-acid chain: Transcription elongation factor SPT6 (1726 aa).

3 stretches are compositionally biased toward acidic residues: residues 1 to 18, 31 to 45, and 55 to 79; these read MSDF…EFEE, EEDE…EDQD, and DDDD…SDSG. 3 disordered regions span residues 1–196, 219–248, and 482–512; these read MSDF…KGKK, AEFD…KKQT, and EVSE…QASR. Serine 90 is subject to Phosphoserine. Residues 93-104 show a composition bias toward acidic residues; the sequence is DYLDDDDLDLIE. Residues 110 to 120 are compositionally biased toward basic residues; sequence KVKRRKKKYSR. Composition is skewed to acidic residues over residues 146–157, 166–186, 219–240, and 484–501; these read GDGEGEVEDGEA, DEEE…DDDG, AEFD…DDES, and SEED…EEEE. Residues 502-512 are compositionally biased toward basic and acidic residues; sequence QKGPDLKQASR. Positions 806 to 865 form a coiled coil; sequence LKRRNAWREDEREKKQQDVENLKKFLLSKKPHVVAVSGENRDAHMVMEDIKRTISELEQN. The S1 motif domain maps to 1204–1273; it reads WNHFDSGSCP…EKFNVDLTCR (70 aa). The region spanning 1316–1426 is the SH2 domain; sequence YIKRVIAHPS…LLGHKYFHEC (111 aa). Threonine 1522 bears the Phosphothreonine mark. Serine 1525 bears the Phosphoserine mark. Positions 1611–1627 are enriched in polar residues; that stretch reads LMTPSYSYTTPGQQQAM. The segment at 1611–1726 is disordered; that stretch reads LMTPSYSYTT…ATPLLDEMDR (116 aa). 2 stretches are compositionally biased toward low complexity: residues 1628 to 1640 and 1647 to 1656; these read TTPQ…PQSS and SSSTPSSSSS. The span at 1657 to 1669 shows a compositional bias: polar residues; that stretch reads RVRTPQPKASSHT.

It belongs to the SPT6 family.

The protein localises to the nucleus. Histone H3-H4 chaperone that plays a role in maintenance of chromatin structure during RNA polymerase II transcription elongation. Promotes the activation of the myogenic gene program by entailing erasure of the repressive H3K27me3 epigenetic mark through stabilization of the chromatin interaction of the H3K27 demethylase KDM6A. Plays an important role during early patterning and somitogenesis of the embryo. The polypeptide is Transcription elongation factor SPT6 (supt6h) (Danio rerio (Zebrafish)).